Consider the following 414-residue polypeptide: Argininosuccinate synthase (414 aa).

Residues 9 to 17 (AYSGGLDTS) and Ala35 each bind ATP. 2 residues coordinate L-citrulline: Tyr86 and Ser91. 114–122 (SHGATGKGN) contributes to the ATP binding site. L-aspartate contacts are provided by Thr118, Asn122, and Asp123. Asn122 lines the L-citrulline pocket. L-citrulline-binding residues include Arg126, Ser179, Ser188, Glu269, and Tyr281.

It belongs to the argininosuccinate synthase family. As to quaternary structure, homotetramer.

It is found in the cytoplasm. It localises to the cytosol. The catalysed reaction is L-citrulline + L-aspartate + ATP = 2-(N(omega)-L-arginino)succinate + AMP + diphosphate + H(+). It participates in amino-acid biosynthesis; L-arginine biosynthesis; L-arginine from L-ornithine and carbamoyl phosphate: step 2/3. Its pathway is nitrogen metabolism; urea cycle; (N(omega)-L-arginino)succinate from L-aspartate and L-citrulline: step 1/1. In terms of biological role, one of the enzymes of the urea cycle, the metabolic pathway transforming neurotoxic amonia produced by protein catabolism into inocuous urea in the liver of ureotelic animals. Catalyzes the formation of arginosuccinate from aspartate, citrulline and ATP and together with ASL it is responsible for the biosynthesis of arginine in most body tissues. This chain is Argininosuccinate synthase, found in Danio rerio (Zebrafish).